The sequence spans 275 residues: Protein rolling stone (275 aa).

6 helical membrane passes run 45-65, 72-92, 127-147, 162-182, 185-205, and 232-252; these read LLYR…CVIV, FFIY…LISA, WLYN…WVFL, IITH…IAFP, ILHM…TLIY, and MVTF…LFGL.

As to expression, expressed in cells of the somatic mesoderm, most notably the muscle founder cells, between embryonic stages 12 and 14, in growing muscle fibers in dorsal, lateral and ventral positions. At stage 16 strongest expression is in some ventral muscles and muscle 8. At stages 16/17 expression is restricted to some cells of the CNS, the brain and the gonads.

The protein resides in the membrane. In terms of biological role, may have a central role in the fusion process during myogenesis, within the somatic mesoderm. The protein is Protein rolling stone (rost) of Drosophila melanogaster (Fruit fly).